A 387-amino-acid chain; its full sequence is Odorant receptor 94a (387 aa).

Residues M1–R45 are Cytoplasmic-facing. A helical transmembrane segment spans residues F46–I66. Topologically, residues S67–Q75 are extracellular. The chain crosses the membrane as a helical span at residues V76–Y96. At R97–W133 the chain is on the cytoplasmic side. Residues F134–L154 traverse the membrane as a helical segment. Topologically, residues F155–T191 are extracellular. Residues C192–L212 form a helical membrane-spanning segment. At Y213 to R255 the chain is on the cytoplasmic side. The helical transmembrane segment at I256–G276 threads the bilayer. Residues Y277–Q290 are Extracellular-facing. The helical transmembrane segment at F291–Y311 threads the bilayer. The Cytoplasmic segment spans residues G312 to A362. A helical transmembrane segment spans residues V363 to L383. N-linked (GlcNAc...) asparagine glycosylation occurs at N384. Residues N384–N387 lie on the Extracellular side of the membrane.

Belongs to the insect chemoreceptor superfamily. Heteromeric odorant receptor channel (TC 1.A.69) family. Or2a subfamily. Interacts with Orco. Complexes exist early in the endomembrane system in olfactory sensory neurons (OSNs), coupling these complexes to the conserved ciliary trafficking pathway.

It is found in the cell membrane. In terms of biological role, odorant receptor which mediates acceptance or avoidance behavior, depending on its substrates. The odorant receptor repertoire encodes a large collection of odor stimuli that vary widely in identity, intensity, and duration. May form a complex with Orco to form odorant-sensing units, providing sensitive and prolonged odorant signaling and calcium permeability. The protein is Odorant receptor 94a (Or94a) of Drosophila melanogaster (Fruit fly).